Consider the following 1495-residue polypeptide: Terminal uridylyltransferase 7 (1495 aa).

Disordered regions lie at residues 1–30 (MGDT…GHPQ), 43–69 (HGSK…RKGP), 89–140 (WMND…EDGY), and 162–205 (LETT…PVID). Residues 15-26 (DRGTMDDDDFRR) are compositionally biased toward basic and acidic residues. 2 positions are modified to phosphothreonine: Thr-57 and Thr-64. Composition is skewed to basic and acidic residues over residues 92–118 (DSHK…EFKP) and 128–140 (QRKD…EDGY). Residues Ser-132 and Ser-172 each carry the phosphoserine modification. The span at 178–187 (QRSRPRKPRK) shows a compositional bias: basic residues. The Matrin-type zinc-finger motif lies at 244-274 (YTCRLCDVLIESIAFAHKHIKEKRHKKNIKE). One can recognise a PAP-associated 1 domain in the interval 551 to 600 (VGQLWVELLRFYALEFNLADLVISIRVKELVSRELKDWPKKRIAIEDPYS). Ser-600 carries the phosphoserine modification. Residues 734-756 (DDYKGDKVYHPETGRKNEKEKVG) are compositionally biased toward basic and acidic residues. Disordered regions lie at residues 734–757 (DDYK…KVGR) and 831–898 (THSV…EDDE). Residues 831–841 (THSVQGQTSEM) are compositionally biased toward polar residues. Composition is skewed to acidic residues over residues 843–859 (PSDE…EEEE), 868–880 (EDED…DELD), and 887–898 (GDEDALSEEDDE). Ser-844 is subject to Phosphoserine. A phosphoserine mark is found at Ser-893 and Ser-939. The interval 951–1495 (SKLIFTKGKS…ASAKRTQQES (545 aa)) is sufficient for monouridylation activity. A CCHC-type 1 zinc finger spans residues 963-980 (VVCSLCKREGHLKKDCPE). Residues 1047–1050 (SSKN), 1057–1060 (SDLD), Asn-1130, Lys-1152, 1170–1174 (SYAYT), and His-1286 contribute to the UTP site. Residues Asp-1058 and Asp-1060 each coordinate Mg(2+). Residues 1233 to 1286 (SVGQLWLGLLRFYTEEFDFKEHVISIRRKSLLTTFKKQWTSKYIVIEDPFDLNH) enclose the PAP-associated 2 domain. The CCHC-type 2 zinc-finger motif lies at 1345–1362 (RCCRICGKIGHFMKDCPM). Disordered stretches follow at residues 1367-1424 (RRRR…MRAA) and 1466-1495 (CPQF…QQES). Residues 1381–1410 (PENKEKRSKEDKEIHNKYTEREVSTKEDKP) are compositionally biased toward basic and acidic residues. The CCHC-type 3 zinc finger occupies 1451–1468 (KRCFICGREGHIKKECPQ). Polar residues predominate over residues 1470 to 1485 (KGSSGSLSSKYMTQGK).

This sequence belongs to the DNA polymerase type-B-like family. Interacts with MOV10; the interaction is RNA-dependent. It depends on Mg(2+) as a cofactor. The cofactor is Mn(2+).

It localises to the cytoplasm. The enzyme catalyses RNA(n) + UTP = RNA(n)-3'-uridine ribonucleotide + diphosphate. Its function is as follows. Uridylyltransferase that mediates the terminal uridylation of mRNAs with short (less than 25 nucleotides) poly(A) tails, hence facilitating global mRNA decay. Essential for both oocyte maturation and fertility. Through 3' terminal uridylation of mRNA, sculpts, with TUT7, the maternal transcriptome by eliminating transcripts during oocyte growth. Involved in microRNA (miRNA)-induced gene silencing through uridylation of deadenylated miRNA targets. Also functions as an integral regulator of microRNA biogenesiS using 3 different uridylation mechanisms. Acts as a suppressor of miRNA biogenesis by mediating the terminal uridylation of some miRNA precursors, including that of let-7 (pre-let-7). Uridylated pre-let-7 RNA is not processed by Dicer and undergo degradation. Pre-let-7 uridylation is strongly enhanced in the presence of LIN28A. In the absence of LIN28A, TUT7 and TUT4 monouridylate group II pre-miRNAs, which includes most of pre-let7 members, that shapes an optimal 3' end overhang for efficient processing. Add oligo-U tails to truncated pre-miRNAS with a 5' overhang which may promote rapid degradation of non-functional pre-miRNA species. Does not play a role in replication-dependent histone mRNA degradation. Due to functional redundancy between TUT4 and TUT7, the identification of the specific role of each of these proteins is difficult. TUT4 and TUT7 restrict retrotransposition of long interspersed element-1 (LINE-1) in cooperation with MOV10 counteracting the RNA chaperonne activity of L1RE1. TUT7 uridylates LINE-1 mRNAs in the cytoplasm which inhibits initiation of reverse transcription once in the nucleus, whereas uridylation by TUT4 destabilizes mRNAs in cytoplasmic ribonucleoprotein granules. The sequence is that of Terminal uridylyltransferase 7 from Homo sapiens (Human).